Consider the following 318-residue polypeptide: Ubiquitin-like domain-containing CTD phosphatase 1 (318 aa).

Residues 3-81 form the Ubiquitin-like domain; it reads LSLIIKWGGQ…IMMMGTREES (79 aa). One can recognise an FCP1 homology domain in the interval 133-294; it reads PREGKKLLVL…VKLSQYLKEI (162 aa). Aspartate 143, aspartate 145, and aspartate 253 together coordinate Mg(2+).

Requires Mg(2+) as cofactor.

The protein resides in the nucleus. The enzyme catalyses O-phospho-L-seryl-[protein] + H2O = L-seryl-[protein] + phosphate. It carries out the reaction O-phospho-L-threonyl-[protein] + H2O = L-threonyl-[protein] + phosphate. Dephosphorylates 26S nuclear proteasomes, thereby decreasing their proteolytic activity. Recruited to the 19S regulatory particle of the 26S proteasome where it dephosphorylates 19S component psmc2 which impairs psmc2 ATPase activity and disrupts 26S proteasome assembly. Has also been reported to stimulate the proteolytic activity of the 26S proteasome. The polypeptide is Ubiquitin-like domain-containing CTD phosphatase 1 (ublcp1) (Xenopus laevis (African clawed frog)).